Consider the following 1174-residue polypeptide: Male determiner protein Mdmd(II) (1174 aa).

The segment covering 1–15 (MNATDAESRKPENKP) has biased composition (basic and acidic residues). Disordered stretches follow at residues 1–51 (MNAT…SGQR), 80–109 (KDGSNEMLPKEDSINTNHNYTTDSNEHPVE), and 136–259 (KQLS…LRRS). Positions 16–35 (SSESSSSGSTSGSSDGEVSS) are enriched in low complexity. Residues 36-47 (KTYFKNNKSKVL) show a composition bias toward polar residues. Basic and acidic residues predominate over residues 80 to 92 (KDGSNEMLPKEDS). Residues 93–102 (INTNHNYTTD) are compositionally biased toward polar residues. Over residues 138–153 (LSAYRSRSRSTRLSYS) the composition is skewed to low complexity. Residues 183–200 (HGRDSSTTKRSVSRDKDN) are compositionally biased toward basic and acidic residues. The span at 201–223 (RLRRRIGSSRSHTRSHSRFRRSE) shows a compositional bias: basic residues. Residues 235-259 (RSQERRHERRRSMSSDYERIALRRS) are compositionally biased toward basic and acidic residues. The region spanning 348 to 531 (KKYIHGYINK…KVLFQVRRDG (184 aa)) is the MIF4G domain. Positions 597 to 608 (DSDGSFGSGSNS) are enriched in low complexity. Positions 597–616 (DSDGSFGSGSNSETALSDCD) are disordered. An MI domain is found at 641-757 (ALRRTIYLTL…SWDVLDCIKL (117 aa)). Residues 840–857 (SAPSSSSSSSLSSELSAP) show a composition bias toward low complexity. Disordered stretches follow at residues 840–1045 (SAPS…SRTK) and 1095–1133 (RKDNYGNRQNHEISQRHDSEIKRRREERKKRHHEKNHSR). Basic residues predominate over residues 869-909 (KKKHKGKNKKMTKKKNPSKKKEKTKKIVGKNKIAAKNKTIK). The span at 910-924 (RRTDKDNSSSKDNFL) shows a compositional bias: basic and acidic residues. The segment covering 926–957 (SESSSNESISLDSLSSELFAPSSYSSSESSND) has biased composition (low complexity). The segment covering 963–1001 (KHKGKNKKMTKKKNPSNKREKTKKKLSKNKKAPNKNTKK) has biased composition (basic residues). A compositionally biased stretch (low complexity) spans 1010–1020 (SSESSISESKS). The span at 1034-1045 (RKKRVTSKSRTK) shows a compositional bias: basic residues. The span at 1095 to 1118 (RKDNYGNRQNHEISQRHDSEIKRR) shows a compositional bias: basic and acidic residues. Residues 1119 to 1130 (REERKKRHHEKN) show a composition bias toward basic residues.

This sequence belongs to the CWC22 family. As to quaternary structure, component of the spliceosome C complex.

It is found in the nucleus speckle. Male determiner protein (M-factor) that controls male somatic sexual differentiation. Acts as a dominant factor that regulates the mRNA splicing of transformer (tra) and doublesex (dsx) transcripts and promotes expression of male splice forms of tra and dsx. Probably acts as a component of the spliceosome C complex required for mRNA splicing factor and exon-junction complex (EJC) assembly. Hinders eIF4AIII from non-specifically binding RNA and escorts it to the splicing machinery to promote EJC assembly on mature mRNAs. This is Male determiner protein Mdmd(II) from Musca domestica (House fly).